An 805-amino-acid chain; its full sequence is MNFAEVIVDVSTKNIDRPFDYKIPDHLKGMIKTGMRVIVPFGPRKIQGFVTAVKEASDLSGKSVKEVEDLLDLTPVLTEELMILSSWLSDKTLSFKITALQAMLPAALKAKYEKELKIAHGADLPPQVERLFSETKTLLYSDIPDHETLKLIQRHVQKGDIDVTYKVAQKTNKKMVRHIQANASKEELAKQAEGLSRQAAKQQAILHFLISEPEGVKIPAAELCKKTDTSSATIKTLIQKGLLKESYEEVYRDPYQDKMFKKTEPLPLTDEQRAAFEPIRETLDSDEHKVFLLHGVTGSGKTEIYLQSIEKVLAKGKEAIVLVPEISLTPQMVNRFKGRFGSQVAVMHSGLSTGEKYDEWRKIHRKEVRLVVGARSAIFAPFENLGMIIIDEEHESSYKQEEMPRYHAKEVAIKRAEHHSCPVVLGSATPTLESYARAQKGVYELLSLKHRVNHRVMPEVSLVDMREELRNGNRSMFSVELMEKLEETIAKGEQAVLFLNKRGYSSFVMCRDCGYVPQCPHCDISMTYHRYGQRLKCHYCGHEEPVPHTCPECASEHIRFFGTGTQRVEEELTKVLPSARVIRMDVDTTSRKGAHEKLLSAFGEGKADILLGTQMIAKGLDFPNVTLVGVLSADTTLHIPDFRSAEKTFQLLTQVSGRAGRHEKPGHVIIQTYTPSHYSIQLTKTHDYETFYQHEMAHRREQSYPPYYYLALVTVSHEEVAKAAVTAEKIAHFLKANCGADTKILGPSASPIARIKDRYRYQCVIKYKQETQLSALLKKILEHYKREIEQKHVMISIDMNPYMMM.

The tract at residues 1-110 (MNFAEVIVDV…QAMLPAALKA (110 aa)) is 3'BD. Positions 111–166 (KYEKELKIAHGADLPPQVERLFSETKTLLYSDIPDHETLKLIQRHVQKGDIDVTYK) are linker. The WH stretch occupies residues 167 to 253 (VAQKTNKKMV…KESYEEVYRD (87 aa)). The Helicase ATP-binding domain maps to 282-448 (TLDSDEHKVF…QKGVYELLSL (167 aa)). An ATP-binding site is contributed by 295 to 302 (GVTGSGKT). Residues 391–394 (DEEH) carry the DEAH box motif. C510, C513, C519, C522, C537, C540, C550, and C553 together coordinate Zn(2+). One can recognise a Helicase C-terminal domain in the interval 545 to 699 (PVPHTCPECA…TFYQHEMAHR (155 aa)).

Belongs to the helicase family. PriA subfamily. As to quaternary structure, monomer. Component of the replication restart primosome which assembles in this order; PriA, DnaD then DnaB. The preferred DNA substrate mimics an arrested DNA replication fork with unreplicated lagging strand. Interacts with DnaD but not DnaB. Interacts with SSB (sbbA) via the latter's 35 residue C-terminal tail which tethers PriA to ssDNA. Colocalizes with DNA pol III subunit gamma/tau (dnaX). May interact with RarA. Zn(2+) serves as cofactor.

It localises to the cytoplasm. The protein resides in the nucleoid. It catalyses the reaction Couples ATP hydrolysis with the unwinding of duplex DNA by translocating in the 3'-5' direction.. It carries out the reaction ATP + H2O = ADP + phosphate + H(+). Functionally, initiates the restart of stalled replication forks, which reloads the replicative helicase on sites other than the origin of replication. Recognizes and binds to abandoned replication forks and remodels them to uncover a helicase loading site. Promotes assembly of the primosome at these replication forks. Serves as the initiating protein for assembly of the replication restart primosome; binding of PriA to an arrested DNA replication fork with unreplicated lagging strand triggers assembly. Sequentially DnaD (possibly as a dimer) and DnaB homotetramers bind. Assembly probably continues by loading of the DnaC replicative helicase aided by helicase loader DnaI. A single-strand (ss)DNA-dependent ATPase with helicase activity. Recognizes and binds the arrested nascent DNA chain at stalled replication forks. Binds forked DNA substrates and makes a larger complex with RarA; RarA has no effect on the helicase function. Binds ssDNA, D-loops and replication fork-like substrates but not double-stranded (ds)DNA; the preferred DNA substrate mimics an arrested DNA replication fork with an unreplicated lagging strand. Recognizes nicked dsDNA. A supershift on ssDNA occurs in the presence of single-stranded binding protein (SSB). Cannot substitute for E.coli PriA. In terms of biological role, required for replication of plasmids that have a rolling circle mechanism, which produces circular single-stranded (ss)DNA intermediates corresponding to the lagging strand template, which are then converted into double-stranded (ds)DNA; priA is required to activate the conversion of ssDNA into dsDNA. The protein is Replication restart protein PriA of Bacillus subtilis (strain 168).